Reading from the N-terminus, the 418-residue chain is MVEVEEVSNKMQAQMRLHPAAAAEEEDADLPLPALFDKASHLHSLASSSSLDQEGIRKGVDLLRRCDEMVSKLGLFSSNETKDDVSTANLKYLLVPYYLGEMTERVAQEDRIPVLKASQDHLKEFISICEALELISEDELELSRQKQPDTMANRRAQKVARFKRQKAAETKLLEIKERKERRRRSLRAAALSAPIEAGEEDAFEDDGEEEREAWLATISLALCKAFDLLDMLKKEEEMLLAVKERQAKDGNAFAREMLDERTKKAEAWHHNAANRAPYSKPADPITCATFAQDVIEGRASVSQAHEHKHQPLIFGPASLVGGGLTSERERMAAQVFQPSYRLPTMSIEEAGLREMKMMEKWQERTAKMIQESNSAWHKDGSRSAQEDEDAEEEKARAWDDWKDDNPRGAGNKKLTPCG.

Residues 367–418 (KMIQESNSAWHKDGSRSAQEDEDAEEEKARAWDDWKDDNPRGAGNKKLTPCG) form a disordered region. Basic and acidic residues-rich tracts occupy residues 376–385 (WHKDGSRSAQ) and 393–406 (EKAR…DDNP).

Belongs to the IGBP1/TAP42 family.

Functionally, involved in the regulation of the TOR signaling pathway. Seems to act as a regulator of PP2A catalytic activity. The polypeptide is PP2A regulatory subunit TAP46 (Oryza sativa subsp. japonica (Rice)).